Consider the following 310-residue polypeptide: Acetylglutamate kinase (310 aa).

Residues glycine 74–glycine 75, arginine 96, and asparagine 201 each bind substrate.

The protein belongs to the acetylglutamate kinase family. ArgB subfamily.

The protein localises to the cytoplasm. It catalyses the reaction N-acetyl-L-glutamate + ATP = N-acetyl-L-glutamyl 5-phosphate + ADP. It functions in the pathway amino-acid biosynthesis; L-arginine biosynthesis; N(2)-acetyl-L-ornithine from L-glutamate: step 2/4. In terms of biological role, catalyzes the ATP-dependent phosphorylation of N-acetyl-L-glutamate. The chain is Acetylglutamate kinase from Arthrobacter sp. (strain FB24).